The following is a 272-amino-acid chain: Formamidopyrimidine-DNA glycosylase (272 aa).

Residue Pro2 is the Schiff-base intermediate with DNA of the active site. Glu3 (proton donor) is an active-site residue. Lys58 acts as the Proton donor; for beta-elimination activity in catalysis. DNA contacts are provided by His91, Arg111, and Arg153. The FPG-type zinc-finger motif lies at 238-272; it reads AVYGRANKACVICSKPLKEIRQAQRSTVFCINCQS. The active-site Proton donor; for delta-elimination activity is Arg262.

Belongs to the FPG family. In terms of assembly, monomer. Zn(2+) is required as a cofactor.

It catalyses the reaction Hydrolysis of DNA containing ring-opened 7-methylguanine residues, releasing 2,6-diamino-4-hydroxy-5-(N-methyl)formamidopyrimidine.. The enzyme catalyses 2'-deoxyribonucleotide-(2'-deoxyribose 5'-phosphate)-2'-deoxyribonucleotide-DNA = a 3'-end 2'-deoxyribonucleotide-(2,3-dehydro-2,3-deoxyribose 5'-phosphate)-DNA + a 5'-end 5'-phospho-2'-deoxyribonucleoside-DNA + H(+). In terms of biological role, involved in base excision repair of DNA damaged by oxidation or by mutagenic agents. Acts as a DNA glycosylase that recognizes and removes damaged bases. Has a preference for oxidized purines, such as 7,8-dihydro-8-oxoguanine (8-oxoG). Has AP (apurinic/apyrimidinic) lyase activity and introduces nicks in the DNA strand. Cleaves the DNA backbone by beta-delta elimination to generate a single-strand break at the site of the removed base with both 3'- and 5'-phosphates. The protein is Formamidopyrimidine-DNA glycosylase of Marinomonas sp. (strain MWYL1).